A 371-amino-acid chain; its full sequence is Chaperone protein DnaJ (371 aa).

Residues 5–69 (DYYEVLGLSK…QKRAQYDQFG (65 aa)) enclose the J domain. The segment at 133 to 215 (GKELNVEIPV…CHGSGKVRKR (83 aa)) adopts a CR-type zinc-finger fold. 8 residues coordinate Zn(2+): cysteine 146, cysteine 149, cysteine 163, cysteine 166, cysteine 189, cysteine 192, cysteine 203, and cysteine 206. CXXCXGXG motif repeat units follow at residues 146–153 (CDTCKGSG), 163–170 (CKHCSGSG), 189–196 (CSHCSGTG), and 203–210 (CTTCHGSG).

Belongs to the DnaJ family. Homodimer. Zn(2+) serves as cofactor.

The protein resides in the cytoplasm. Its function is as follows. Participates actively in the response to hyperosmotic and heat shock by preventing the aggregation of stress-denatured proteins and by disaggregating proteins, also in an autonomous, DnaK-independent fashion. Unfolded proteins bind initially to DnaJ; upon interaction with the DnaJ-bound protein, DnaK hydrolyzes its bound ATP, resulting in the formation of a stable complex. GrpE releases ADP from DnaK; ATP binding to DnaK triggers the release of the substrate protein, thus completing the reaction cycle. Several rounds of ATP-dependent interactions between DnaJ, DnaK and GrpE are required for fully efficient folding. Also involved, together with DnaK and GrpE, in the DNA replication of plasmids through activation of initiation proteins. The protein is Chaperone protein DnaJ of Bacillus cereus (strain 03BB102).